The primary structure comprises 102 residues: Small ribosomal subunit protein uS10 (102 aa).

This sequence belongs to the universal ribosomal protein uS10 family. Part of the 30S ribosomal subunit.

Involved in the binding of tRNA to the ribosomes. The sequence is that of Small ribosomal subunit protein uS10 from Methanospirillum hungatei JF-1 (strain ATCC 27890 / DSM 864 / NBRC 100397 / JF-1).